The primary structure comprises 264 residues: 14-3-3-like protein GF14-A (264 aa).

The disordered stretch occupies residues 245 to 264 (DMQDDGGDEMRDATKPEDEH). The span at 252–264 (DEMRDATKPEDEH) shows a compositional bias: basic and acidic residues.

This sequence belongs to the 14-3-3 family.

Its function is as follows. Is associated with a DNA binding complex that binds to the G box, a well-characterized cis-acting DNA regulatory element found in plant genes. This Oryza sativa subsp. japonica (Rice) protein is 14-3-3-like protein GF14-A (GF14A).